The sequence spans 372 residues: Peptide chain release factor 2 (372 aa).

Residue Gln-253 is modified to N5-methylglutamine.

Belongs to the prokaryotic/mitochondrial release factor family. Methylated by PrmC. Methylation increases the termination efficiency of RF2.

It is found in the cytoplasm. In terms of biological role, peptide chain release factor 2 directs the termination of translation in response to the peptide chain termination codons UGA and UAA. This Mycolicibacterium gilvum (strain PYR-GCK) (Mycobacterium gilvum (strain PYR-GCK)) protein is Peptide chain release factor 2.